A 260-amino-acid chain; its full sequence is UPF0246 protein BamMC406_2140 (260 aa).

This sequence belongs to the UPF0246 family.

The protein is UPF0246 protein BamMC406_2140 of Burkholderia ambifaria (strain MC40-6).